The primary structure comprises 515 residues: G-protein coupled receptor 176 (515 aa).

The Extracellular segment spans residues 1–41; sequence MGHNSSWVSPNTSHPRNTSGAEAGANLSAFGELSEAQLYRQ. Asn-4, Asn-11, Asn-17, and Asn-26 each carry an N-linked (GlcNAc...) asparagine glycan. Residues 42–64 traverse the membrane as a helical segment; it reads FTTTVQVVIFIGSLLGNFMVLWS. Over 65 to 77 the chain is Cytoplasmic; sequence TCRTTVFKSVTNR. The chain crosses the membrane as a helical span at residues 78 to 98; sequence FIKNLACSGICASVVCVPFDI. Residues 99–108 are Extracellular-facing; the sequence is ILSSSPHCCW. The chain crosses the membrane as a helical span at residues 109-129; sequence WIYTMLFCKVLKFLHKVFCSV. The Cytoplasmic portion of the chain corresponds to 130–157; it reads TVLSFPAIALDRYYSVLYPLERKISDAK. The helical transmembrane segment at 158–177 threads the bilayer; it reads SRELVMYIWAHAVVASVPVF. At 178-204 the chain is on the extracellular side; sequence AVTNVADIYAMSTCTEVWSNSLGHLVY. A helical transmembrane segment spans residues 205-225; that stretch reads VLIYNVTTVIVPVAVVFLFLI. Residues 226-264 are Cytoplasmic-facing; it reads LIRRALSASQKKKVIIAALRTPQNTISIPYASQREAELH. The helical transmembrane segment at 265–285 threads the bilayer; that stretch reads ATLLSMVTVFILCSVPYATLV. Residues 286-301 are Extracellular-facing; it reads VYQTVLNVPNTSVFLL. A helical transmembrane segment spans residues 302–322; that stretch reads LTAIWLPKVSLLANPVLFLTV. Residues 323–515 are Cytoplasmic-facing; the sequence is NKSVRKCLVG…KVSIFPKVDS (193 aa). A disordered region spans residues 407–435; sequence SCPEGEQEPPQLAPSVPPPGTVDSEPRVS. Residues 417-426 show a composition bias toward pro residues; it reads QLAPSVPPPG.

Belongs to the G-protein coupled receptor 1 family. Expressed mainly in the brain, with prominent expression in the SCN (at protein level).

The protein localises to the cell membrane. In terms of biological role, orphan receptor involved in normal circadian rhythm behavior. Acts through the G-protein subclass G(z)-alpha and has an agonist-independent basal activity to repress cAMP production. This is G-protein coupled receptor 176 (Gpr176) from Mus musculus (Mouse).